A 630-amino-acid polypeptide reads, in one-letter code: MWRGCVSRGLRSLSKGKGSSSSAPVSAAARLFSTASSSYTVVDHSYDAVVVGAGGAGLRAAIGLSEHGFNTACITKLFPTRSHTVAAQGGINAALGNMTEDDWRWHMYDTVKGSDWLGDQDSIQYMCREAPKAVIELENYGLPFSRTEDGKIYQRAFGGQSLDFGKGGQAYRCACAADRTGHAMLHTLYGQAMKHNTQFFVEYFALDLIMDSEGTCQGVIALNMEDGTLHRFRATNTILATGGYGRAYFSATSAHTCTGDGNAMVARAGLPLQDLEFVQFHPTGIYGAGCLITEGSRGEGGILRNSEGERFMERYAPTAKDLASRDVVSRSMTMEIREGRGVGPLKDHIYLHLNHLPPEVLKERLPGISETAAIFAGVDVTKEPIPVLPTVHYNMGGIPTNYHGEVVTMKGDNPDSVVPGLMAAGEAACASVHGANRLGANSLLDIVVFGRACANRVAETAKPGEKQKPLQKSAGEKTIAWLDKLRNANGSLPTSKIRLNMQRVMQNNAAVFRTQETLEEGCKLITKAWESYHDVKISDRSLIWNSDLIETIELENLLINACITMHSAEARKESRGAHAREDFTKRDDEQWMKHSLGYWENEKVRLAYRPVHMNTLDSEVESFPPKARVY.

The transit peptide at 1–31 (MWRGCVSRGLRSLSKGKGSSSSAPVSAAARL) directs the protein to the mitochondrion. FAD is bound by residues 52–57 (GAGGAG), 75–90 (TKLF…AQGG), and Asp-260. His-83 bears the Tele-8alpha-FAD histidine mark. His-281 and Thr-293 together coordinate substrate. Arg-325 acts as the Proton acceptor in catalysis. Substrate is bound at residue His-392. Glu-426 contributes to the FAD binding site. Arg-437 contributes to the substrate binding site. 442–443 (SL) is an FAD binding site.

It belongs to the FAD-dependent oxidoreductase 2 family. FRD/SDH subfamily. In terms of assembly, component of complex II composed of eight subunits in plants: four classical SDH subunits SDH1, SDH2, SDH3 and SDH4 (a flavoprotein (FP), an iron-sulfur protein (IP), and a cytochrome b composed of a large and a small subunit.), as well as four subunits unknown in mitochondria from bacteria and heterotrophic eukaryotes. It depends on FAD as a cofactor.

It is found in the mitochondrion inner membrane. It catalyses the reaction a quinone + succinate = fumarate + a quinol. The protein operates within carbohydrate metabolism; tricarboxylic acid cycle; fumarate from succinate (eukaryal route): step 1/1. Its function is as follows. Flavoprotein (FP) subunit of succinate dehydrogenase (SDH) that is involved in complex II of the mitochondrial electron transport chain and is responsible for transferring electrons from succinate to ubiquinone (coenzyme Q). The protein is Succinate dehydrogenase [ubiquinone] flavoprotein subunit, mitochondrial (SDH1) of Oryza sativa subsp. japonica (Rice).